We begin with the raw amino-acid sequence, 487 residues long: ATP-dependent 6-phosphofructokinase (487 aa).

Residues glycine 107, arginine 173–glycine 174, glycine 198–threonine 201, and lysine 226 contribute to the ATP site. Aspartate 199 is a binding site for Mg(2+). Substrate-binding positions include threonine 227–aspartate 229, methionine 272–arginine 274, and glutamate 325. The Proton acceptor role is filled by aspartate 229. Serine 341–asparagine 343 serves as a coordination point for ATP. Tyrosine 380–arginine 383 lines the substrate pocket. Positions alanine 485–leucine 487 match the Peroxisomal targeting signal motif.

This sequence belongs to the phosphofructokinase type A (PFKA) family. PPi-dependent PFK group II subfamily. Atypical ATP-dependent clade 'X' sub-subfamily. In terms of assembly, homotetramer. It depends on Mg(2+) as a cofactor.

The protein resides in the glycosome. The catalysed reaction is beta-D-fructose 6-phosphate + ATP = beta-D-fructose 1,6-bisphosphate + ADP + H(+). It functions in the pathway carbohydrate degradation; glycolysis; D-glyceraldehyde 3-phosphate and glycerone phosphate from D-glucose: step 3/4. Allosterically activated by AMP. In terms of biological role, catalyzes the phosphorylation of D-fructose 6-phosphate to fructose 1,6-bisphosphate by ATP, the first committing step of glycolysis. The polypeptide is ATP-dependent 6-phosphofructokinase (Trypanosoma brucei brucei).